The chain runs to 188 residues: dCTP deaminase (188 aa).

DCTP-binding positions include 111–116 (KSTYAR), 135–137 (TLE), glutamine 156, tyrosine 170, and glutamine 180. The active-site Proton donor/acceptor is glutamate 137.

The protein belongs to the dCTP deaminase family. In terms of assembly, homotrimer.

It catalyses the reaction dCTP + H2O + H(+) = dUTP + NH4(+). It functions in the pathway pyrimidine metabolism; dUMP biosynthesis; dUMP from dCTP (dUTP route): step 1/2. In terms of biological role, catalyzes the deamination of dCTP to dUTP. The protein is dCTP deaminase of Ectopseudomonas mendocina (strain ymp) (Pseudomonas mendocina).